A 230-amino-acid chain; its full sequence is Fibrillarin-like rRNA/tRNA 2'-O-methyltransferase (230 aa).

S-adenosyl-L-methionine-binding positions include 87–88 (TT), 105–106 (EF), 130–131 (DA), and 150–153 (DVAQ).

Belongs to the methyltransferase superfamily. Fibrillarin family. Interacts with nop5. Component of box C/D small ribonucleoprotein (sRNP) particles that contain rpl7ae, FlpA and nop5, plus a guide RNA.

Involved in pre-rRNA and tRNA processing. Utilizes the methyl donor S-adenosyl-L-methionine to catalyze the site-specific 2'-hydroxyl methylation of ribose moieties in rRNA and tRNA. Site specificity is provided by a guide RNA that base pairs with the substrate. Methylation occurs at a characteristic distance from the sequence involved in base pairing with the guide RNA. The protein is Fibrillarin-like rRNA/tRNA 2'-O-methyltransferase of Methanococcus maripaludis (strain C5 / ATCC BAA-1333).